The chain runs to 305 residues: UDP-3-O-acyl-N-acetylglucosamine deacetylase (305 aa).

Zn(2+) contacts are provided by histidine 79, histidine 238, and aspartate 242. The active-site Proton donor is histidine 265.

The protein belongs to the LpxC family. Requires Zn(2+) as cofactor.

The enzyme catalyses a UDP-3-O-[(3R)-3-hydroxyacyl]-N-acetyl-alpha-D-glucosamine + H2O = a UDP-3-O-[(3R)-3-hydroxyacyl]-alpha-D-glucosamine + acetate. It participates in glycolipid biosynthesis; lipid IV(A) biosynthesis; lipid IV(A) from (3R)-3-hydroxytetradecanoyl-[acyl-carrier-protein] and UDP-N-acetyl-alpha-D-glucosamine: step 2/6. In terms of biological role, catalyzes the hydrolysis of UDP-3-O-myristoyl-N-acetylglucosamine to form UDP-3-O-myristoylglucosamine and acetate, the committed step in lipid A biosynthesis. This Shewanella woodyi (strain ATCC 51908 / MS32) protein is UDP-3-O-acyl-N-acetylglucosamine deacetylase.